The sequence spans 887 residues: Protein PTHB1 (887 aa).

The seven-bladed beta-propeller stretch occupies residues 1–407 (MSLFKARDWW…SQGVWPMTER (407 aa)). The interaction with LZTL1 stretch occupies residues 685 to 765 (KDKTPAPLQH…FLPLQEDTQE (81 aa)). The interval 850–887 (DLEERSVEQDSTELFTNHRHLTAETPRPEVSPLQGVSE) is disordered.

As to quaternary structure, part of BBSome complex, that contains BBS1, BBS2, BBS4, BBS5, BBS7, BBS8/TTC8, BBS9 and BBIP10. Interacts with LZTL1; the interaction mediates the association of LZTL1 with the BBsome complex and regulates BBSome ciliary trafficking. As to expression, widely expressed. Expressed in adult heart, skeletal muscle, lung, liver, kidney, placenta and brain, and in fetal kidney, lung, liver and brain.

The protein resides in the cytoplasm. Its subcellular location is the cytoskeleton. The protein localises to the microtubule organizing center. It is found in the centrosome. It localises to the cell projection. The protein resides in the cilium membrane. Its subcellular location is the centriolar satellite. Functionally, the BBSome complex is thought to function as a coat complex required for sorting of specific membrane proteins to the primary cilia. The BBSome complex is required for ciliogenesis but is dispensable for centriolar satellite function. This ciliogenic function is mediated in part by the Rab8 GDP/GTP exchange factor, which localizes to the basal body and contacts the BBSome. Rab8(GTP) enters the primary cilium and promotes extension of the ciliary membrane. Firstly the BBSome associates with the ciliary membrane and binds to RAB3IP/Rabin8, the guanosyl exchange factor (GEF) for Rab8 and then the Rab8-GTP localizes to the cilium and promotes docking and fusion of carrier vesicles to the base of the ciliary membrane. Required for proper BBSome complex assembly and its ciliary localization. This Homo sapiens (Human) protein is Protein PTHB1 (BBS9).